A 1062-amino-acid polypeptide reads, in one-letter code: Platelet-derived growth factor receptor alpha (1062 aa).

The signal sequence occupies residues 1–27; sequence MFPPSSAPLLLPQLEELVVPLHTAFTL. Ig-like C2-type domains lie at 28 to 96, 91 to 184, 190 to 281, 287 to 381, and 389 to 493; these read TCQG…VYVP, IYVY…VHGW, LHVE…KQIA, SEFM…RTVS, and PAVI…IKLV. Topologically, residues 28-504 are extracellular; that stretch reads TCQGEATIAW…NGPHPELTVA (477 aa). An intrachain disulfide couples cysteine 29 to cysteine 74. Residues asparagine 79 and asparagine 132 are each glycosylated (N-linked (GlcNAc...) asparagine). 2 disulfides stabilise this stretch: cysteine 124–cysteine 165 and cysteine 211–cysteine 265. Residues asparagine 273, asparagine 333, asparagine 366, asparagine 433, and asparagine 444 are each glycosylated (N-linked (GlcNAc...) asparagine). Cysteines 410 and 477 form a disulfide. The helical transmembrane segment at 505 to 525 threads the bilayer; sequence AAVLVLLVIVIISLIVLVVIW. Over 526–1062 the chain is Cytoplasmic; sequence KQKPRYEIRW…CSDLVEDSFL (537 aa). Phosphotyrosine; by autocatalysis occurs at positions 548 and 550. Residues 569–945 enclose the Protein kinase domain; it reads LVLGRILGSG…HYERVNHEFL (377 aa). ATP-binding positions include 575–583 and lysine 603; that span reads LGSGAFGKV. Phosphotyrosine; by autocatalysis occurs at positions 697, 708, 719, 731, and 739. The interval 734–754 is disordered; the sequence is LQGSNYDHPPSQKGSNDGEMD. Aspartate 793 serves as the catalytic Proton acceptor. Phosphotyrosine; by autocatalysis is present on residues tyrosine 824 and tyrosine 963. Residues 975 to 986 show a composition bias toward basic and acidic residues; that stretch reads KDRESGFDEQRL. The interval 975-1034 is disordered; that stretch reads KDRESGFDEQRLSSDSGYIIPLPDLDPISDEEYGKRNRHSSQTSEESAIETGSSSSTFAK. Tyrosine 992 carries the phosphotyrosine; by autocatalysis modification. Residues 1014-1032 show a composition bias toward polar residues; that stretch reads SSQTSEESAIETGSSSSTF.

It belongs to the protein kinase superfamily. Tyr protein kinase family. CSF-1/PDGF receptor subfamily. In terms of assembly, interacts with homodimeric pdgfa, pdgfb and pdgfc, and with heterodimers formed by pdgfa and pdgfb. monomer in the absence of bound ligand. Interaction with dimeric pdgfa, pdgfb and/or pdgfc leads to receptor dimerization, where both pdgfra homodimers and heterodimers with pdgfrb are observed. Ubiquitinated, leading to its degradation. Post-translationally, autophosphorylated on tyrosine residues upon ligand binding. Autophosphorylation occurs in trans, i.e. one subunit of the dimeric receptor phosphorylates tyrosine residues on the other subunit.

The protein localises to the cell membrane. It carries out the reaction L-tyrosyl-[protein] + ATP = O-phospho-L-tyrosyl-[protein] + ADP + H(+). Its activity is regulated as follows. Present in an inactive conformation in the absence of bound ligand. Binding of pdgfa and/or pdgfb leads to dimerization and activation by autophosphorylation on tyrosine residues. Functionally, tyrosine-protein kinase that acts as a cell-surface receptor for pdgfa, pdgfb and pdgfc and plays an essential role in the regulation of embryonic development, cell proliferation, survival and chemotaxis. Depending on the context, promotes or inhibits cell proliferation and cell migration. Plays an important role in the differentiation of bone marrow-derived mesenchymal stem cells. Required for normal skeleton development. Required for normal development of the gastrointestinal tract. Plays a role in cell migration and chemotaxis in wound healing. Plays a role in platelet activation, secretion of agonists from platelet granules, and in thrombin-induced platelet aggregation. Binding of its cognate ligands - homodimeric pdgfa, homodimeric pdgfb, heterodimers formed by pdgfa and pdgfb or homodimeric pdgfc -leads to the activation of several signaling cascades; the response depends on the nature of the bound ligand and is modulated by the formation of heterodimers between pdgfra and pdgfrb. Phosphorylates pik3r1, plcg1, and ptpn11. Activation of plcg1 leads to the production of the cellular signaling molecules diacylglycerol and inositol 1,4,5-trisphosphate, mobilization of cytosolic Ca(2+) and the activation of protein kinase C. Phosphorylates pik3r1, the regulatory subunit of phosphatidylinositol 3-kinase, and thereby mediates activation of the AKT1 signaling pathway. Mediates activation of hras and of the MAP kinases mapk1/erk2 and/or mapk3/erk1. Promotes activation of STAT family members stat1, stat3 and stat5a and/or stat5b. Receptor signaling is down-regulated by protein phosphatases that dephosphorylate the receptor and its down-stream effectors, and by rapid internalization of the activated receptor. This is Platelet-derived growth factor receptor alpha (pdgfra) from Takifugu rubripes (Japanese pufferfish).